Reading from the N-terminus, the 848-residue chain is DNA mismatch repair protein MutS (848 aa).

610–617 (GPNMGGKS) serves as a coordination point for ATP.

This sequence belongs to the DNA mismatch repair MutS family.

This protein is involved in the repair of mismatches in DNA. It is possible that it carries out the mismatch recognition step. This protein has a weak ATPase activity. This Francisella philomiragia subsp. philomiragia (strain ATCC 25017 / CCUG 19701 / FSC 153 / O#319-036) protein is DNA mismatch repair protein MutS.